Here is a 376-residue protein sequence, read N- to C-terminus: Putative glutamate--cysteine ligase 2-1 (376 aa).

The protein belongs to the glutamate--cysteine ligase type 2 family. YbdK subfamily.

The catalysed reaction is L-cysteine + L-glutamate + ATP = gamma-L-glutamyl-L-cysteine + ADP + phosphate + H(+). Functionally, ATP-dependent carboxylate-amine ligase which exhibits weak glutamate--cysteine ligase activity. The protein is Putative glutamate--cysteine ligase 2-1 of Mycolicibacterium smegmatis (strain ATCC 700084 / mc(2)155) (Mycobacterium smegmatis).